Here is a 481-residue protein sequence, read N- to C-terminus: Tetratricopeptide repeat protein 29 (481 aa).

The span at 1-18 shows a compositional bias: low complexity; the sequence is MASVGPVKTKTVTLKELT. The interval 1 to 53 is disordered; the sequence is MASVGPVKTKTVTLKELTPPIPSPEKSACKGAKPDSNHMALVPVKPSQPGSGK. TPR repeat units lie at residues 191-224, 231-264, 271-310, 317-350, 357-390, and 397-430; these read CERC…AMES, QEVR…AMAL, VEAN…SQRV, ADSL…ARAA, KRAS…SEKA, and YRAT…ARKL.

As to quaternary structure, interacts with TAX-1.

The protein localises to the cytoplasm. It localises to the cytoskeleton. It is found in the flagellum axoneme. Functionally, axonemal protein which is implicated in axonemal and/or peri-axonemal structure assembly and regulates flagellum assembly and beating. This Trypanosoma brucei brucei (strain 927/4 GUTat10.1) protein is Tetratricopeptide repeat protein 29.